Consider the following 133-residue polypeptide: uncharacterized protein (133 aa).

Residues 107–133 (TSHHRAAGLQSQHAPGSGRVRITGGKV) are disordered.

This is an uncharacterized protein from Homo sapiens (Human).